A 1502-amino-acid chain; its full sequence is Rho GTPase-activating protein 5 (1502 aa).

FF domains follow at residues 267–325 (QLVV…HIEQ), 366–420 (KLME…HVQH), 427–481 (RVEM…HQRE), and 482–548 (IVEK…HIGF). Tyr550 bears the 3'-nitrotyrosine mark. 2 positions are modified to phosphoserine: Ser590 and Ser765. In terms of domain architecture, pG1 pseudoGTPase spans 590–763 (STNIDKVNLF…LESVKHNLDV (174 aa)). Positions 779–944 (RIVMCAMCGD…FSDVLEKKNM (166 aa)) constitute a pG2 pseudoGTPase domain. Ser951 and Ser968 each carry phosphoserine. Disordered stretches follow at residues 975-1004 (YNNY…LPTP), 1022-1050 (HSTP…PKTN), and 1069-1089 (NPRK…DPSD). Residues 1036 to 1045 (VPPPIKPKPV) show a composition bias toward pro residues. Position 1115 is a phosphoserine (Ser1115). 2 disordered regions span residues 1125-1156 (FVNN…YKYK) and 1168-1254 (YRRT…TRRN). Over residues 1140 to 1150 (RTSKSHGERRP) the composition is skewed to basic and acidic residues. Residues Ser1173, Ser1176, Ser1195, Ser1202, and Ser1218 each carry the phosphoserine modification. The Rho-GAP domain maps to 1262–1449 (MPLQDLVTAE…TFIQQCQFFF (188 aa)).

May interact with RASA1/p120GAP. As to expression, detected in skin fibroblasts (at protein level).

The protein resides in the cytoplasm. Its subcellular location is the cell membrane. Its function is as follows. GTPase-activating protein for Rho family members. The chain is Rho GTPase-activating protein 5 (ARHGAP5) from Homo sapiens (Human).